A 549-amino-acid polypeptide reads, in one-letter code: Beta-hexosaminidase Amuc_0868 (549 aa).

Residues 1–28 form the signal peptide; it reads MISKCTFSATVFSLFSLCWGAPSSPVLE. Position 161 (Arg161) interacts with substrate. Catalysis depends on charge relay system residues Asp190 and His260. Asp326 lines the substrate pocket. Catalysis depends on Glu327, which acts as the Charge relay system. Residues Trp393, 420 to 422, and 474 to 476 contribute to the substrate site; these read YFD and WTE. Residues 526 to 549 form a disordered region; it reads GVNYKRPDNGAPAQPKAVITRERR.

It belongs to the glycosyl hydrolase 20 family.

The catalysed reaction is Hydrolysis of terminal non-reducing N-acetyl-D-hexosamine residues in N-acetyl-beta-D-hexosaminides.. With respect to regulation, inhibited strongly by Cu(2+), Zn(2+), Cd(2+) and Ni(2+) ions. No effect on activity with Na(+), Li(+), K(+), Ca(2+), Mg(2+) or Mn(2+) ions. Potentially capable of cleaving the specific glycoside linkages in the process of mucin degradation in human intestinal tract. Hydrolyzes chromogenic substrates pNP-beta-GlcNAc with high activity and pNP-beta-GalNAc to a lesser extent, but not pNP-beta-glucose or pNP-beta-galactose. The sequence is that of Beta-hexosaminidase Amuc_0868 from Akkermansia muciniphila (strain ATCC BAA-835 / DSM 22959 / JCM 33894 / BCRC 81048 / CCUG 64013 / CIP 107961 / Muc).